A 508-amino-acid polypeptide reads, in one-letter code: MGLPWYRVHTVVLNDPGRLISVHIMHTALVAGWAGSMALYELAVFDPSDPVLDPMWRQGMFVIPFMTRLGITNSWGGWSITGGTITNPGIWSYEGVAGAHIVFSGLCFLAAIWHWVYWDLEIFCDERTGKPSLDLPKIFGIHLFLSGVACFGFGAFHVTGLYGPGIWVSDPYGLTGRVQAVNPAWGVEGFDPFVPGGIASHHIAAGTLGILAGLFHLSVRPPQRLYKGLRMGNIETVLSSSIAAVFFAAFVVAGTMWYGSATTPIELFGPTRYQWDQGYFQQEIYRRVSAGLAENKSLSEAWSKIPEKLAFYDYIGNNPAKGGLFRAGSMDNGDGIAVGWLGHPIFRDKEGRELYVRRMPTFFETFPVVLVDGDGIVRADVPFRRAESKYSVEQVGVTVEFYGGELNGVSYSDPATVKKYARRAQLGEIFELDRATLKSDGVFRSSPRGWFTFGHASFALLFFFGHIWHGARTLFRDVFAGIDPDLDAQVEFGAFQKLGDPTTRRQVV.

Helical transmembrane passes span 21–36 (SVHIMHTALVAGWAGS), 101–115 (IVFSGLCFLAAIWHW), 140–156 (GIHLFLSGVACFGFGAF), 203–218 (IAAGTLGILAGLFHLS), 237–252 (VLSSSIAAVFFAAFVV), and 457–472 (SFALLFFFGHIWHGAR).

This sequence belongs to the PsbB/PsbC family. PsbB subfamily. As to quaternary structure, PSII is composed of 1 copy each of membrane proteins PsbA, PsbB, PsbC, PsbD, PsbE, PsbF, PsbH, PsbI, PsbJ, PsbK, PsbL, PsbM, PsbT, PsbX, PsbY, PsbZ, Psb30/Ycf12, at least 3 peripheral proteins of the oxygen-evolving complex and a large number of cofactors. It forms dimeric complexes. Requires Binds multiple chlorophylls. PSII binds additional chlorophylls, carotenoids and specific lipids. as cofactor.

It localises to the plastid. The protein localises to the chloroplast thylakoid membrane. Functionally, one of the components of the core complex of photosystem II (PSII). It binds chlorophyll and helps catalyze the primary light-induced photochemical processes of PSII. PSII is a light-driven water:plastoquinone oxidoreductase, using light energy to abstract electrons from H(2)O, generating O(2) and a proton gradient subsequently used for ATP formation. The chain is Photosystem II CP47 reaction center protein from Morus indica (Mulberry).